The following is a 131-amino-acid chain: uncharacterized protein (131 aa).

Positions 15 to 43 (QLQAEHGSAPSNIASGPSSNQQQQEVQDE) are disordered. The span at 23-34 (APSNIASGPSSN) shows a compositional bias: polar residues.

Belongs to the PDCD5 family.

This is an uncharacterized protein from Schizosaccharomyces pombe (strain 972 / ATCC 24843) (Fission yeast).